The sequence spans 118 residues: Large ribosomal subunit protein uL18 (118 aa).

It belongs to the universal ribosomal protein uL18 family. In terms of assembly, part of the 50S ribosomal subunit; part of the 5S rRNA/L5/L18/L25 subcomplex. Contacts the 5S and 23S rRNAs.

Its function is as follows. This is one of the proteins that bind and probably mediate the attachment of the 5S RNA into the large ribosomal subunit, where it forms part of the central protuberance. This is Large ribosomal subunit protein uL18 from Rickettsia peacockii (strain Rustic).